Here is a 1439-residue protein sequence, read N- to C-terminus: ABC transporter G family member 14 (1439 aa).

The segment covering 1-17 (MEENSNKFEQELKEIGQ) has biased composition (basic and acidic residues). Residues 1–21 (MEENSNKFEQELKEIGQDRNQ) form a disordered region. The ABC transporter 1 domain occupies 117–370 (FSILNFFKPS…FMSLGFDCEP (254 aa)). One can recognise an ABC transmembrane type-2 1 domain in the interval 475–700 (LNDKFGLFTK…GSEFDAYRIC (226 aa)). Transmembrane regions (helical) follow at residues 479-499 (FGLFTKYLSVLIQAFVYSSVF), 516-536 (ILSAVIFNAFLSVGEMSMTFI), 564-584 (IPFTLLQVFLFSIIAYFMFGL), 589-609 (GKFFIFSFTLVGASLACTALF), 614-634 (YLCPSMYIAQNISNVFIIFML), and 734-754 (IIVYCWWIFFVICNMLAMEYI). One can recognise an ABC transporter 2 domain in the interval 805-1049 (FTWQNIRYTV…LTSYFERHGV (245 aa)). 841–848 (GSSGAGKT) serves as a coordination point for ATP. The ABC transmembrane type-2 2 domain maps to 1141-1366 (YYTYGSFVQS…YNTCQNYTSA (226 aa)). Transmembrane regions (helical) follow at residues 1144 to 1164 (YGSFVQSALCGLIIGFTFWNL), 1175 to 1195 (IFFIFEALMLGILLIFVVMPQ), 1217 to 1237 (FAISIVVVELPFIVISGTIFF), 1256 to 1276 (FYFWFIFVIFLFFCVSFGQAV), 1283 to 1303 (MFFAMTLIPLLIVFLFLFSGV), and 1413 to 1433 (VGIIICFFVFNILMVILFVYL).

This sequence belongs to the ABC transporter superfamily. ABCG family. PDR (TC 3.A.1.205) subfamily.

It localises to the membrane. In Dictyostelium discoideum (Social amoeba), this protein is ABC transporter G family member 14 (abcG14).